Reading from the N-terminus, the 302-residue chain is Sulfate adenylyltransferase subunit 2 (302 aa).

Belongs to the PAPS reductase family. CysD subfamily. Heterodimer composed of CysD, the smaller subunit, and CysN.

The enzyme catalyses sulfate + ATP + H(+) = adenosine 5'-phosphosulfate + diphosphate. Its pathway is sulfur metabolism; hydrogen sulfide biosynthesis; sulfite from sulfate: step 1/3. Functionally, with CysN forms the ATP sulfurylase (ATPS) that catalyzes the adenylation of sulfate producing adenosine 5'-phosphosulfate (APS) and diphosphate, the first enzymatic step in sulfur assimilation pathway. APS synthesis involves the formation of a high-energy phosphoric-sulfuric acid anhydride bond driven by GTP hydrolysis by CysN coupled to ATP hydrolysis by CysD. The sequence is that of Sulfate adenylyltransferase subunit 2 from Pectobacterium carotovorum subsp. carotovorum (strain PC1).